Reading from the N-terminus, the 870-residue chain is MQDKYTPADIERAAQQHWDKTGAARAVEDATKPKYYCLSMFPYPSGKLHMGHVRNYTIGDVLSRFHKMQGYNVLQPMGWDAFGMPAENAALQNNVPPAGWTYSNIDYMRQQLKSLGFAIDWEREFATCTPEYYRWEQWLFTRLYEKGLVYKKLGTVNWDPVDHTVLANEQVIDGRGWRSGALIEKREIPMYYMKITAYAEELLSELDNLPGWPEQVRLMQKNWIGKSTGVRFAFPLADNPDEKLWVFTTRADTIMGVTFVAVAAEHPLATKAAANNPELAAFIEECKKGGVAEADIATMEKKGMPTGIYVTHPLTGQQVEVWVGNYVLMSYGDGAVMAVPAHDERDFAFALKYNLPIKQVVAVDGETAFSHEAWAEWYADKAKGKLVNSGKYDGLGYEAAVDAIAADLAAKNLGDKKVQFRLRDWGISRQRYWGCPIPIIHCKTCGDVPVPDDQLPVVLPENVEITGAGSPLAKMPEFYECQCPKCGGDARRETDTMDTFFESSWYFLRYACPDNTTAMVDERVAYWCKGGIDQYIGGIEHAILHLLYSRFFTKLMRDVGLIGDLGEPFANLLTQGMVVAPTFYRELDGGKKQWINPADVDVVTDERGRPTGATLKTDGLPVVIGGTEKMSKSKNNGVDPQALIDQYGADTARLFIMFASPPDQSLEWSDAGVEGAYRFLRRLWKTTYDHLQAGLVAASTSNDGLSSAQADLRRKLHQTMGKVADDYGRRKQFNTAIAAVMELLNAYDKCDLKDAAGRALAQESLESIALLLFPIVPHIGQALYAQLRPGADAGNAAFPKADPAALKQDEIELMVQVNGKLRGAIRVSAEADKATIEATALANEDAIKFMEGKPAKKVIVVPGRLVNIVA.

The 'HIGH' region signature appears at 42-52; sequence PYPSGKLHMGH. Residues 629-633 carry the 'KMSKS' region motif; the sequence is KMSKS. Lys-632 is a binding site for ATP.

Belongs to the class-I aminoacyl-tRNA synthetase family.

It is found in the cytoplasm. It catalyses the reaction tRNA(Leu) + L-leucine + ATP = L-leucyl-tRNA(Leu) + AMP + diphosphate. The polypeptide is Leucine--tRNA ligase (Dechloromonas aromatica (strain RCB)).